The chain runs to 552 residues: Glutamate--tRNA ligase (552 aa).

The short motif at 41–51 (PSPTGFQHIGG) is the 'HIGH' region element. Residues 293-297 (KLSKR) carry the 'KMSKS' region motif. Lys-296 is an ATP binding site.

It belongs to the class-I aminoacyl-tRNA synthetase family. Glutamate--tRNA ligase type 1 subfamily. Monomer.

The protein resides in the cytoplasm. The enzyme catalyses tRNA(Glu) + L-glutamate + ATP = L-glutamyl-tRNA(Glu) + AMP + diphosphate. In terms of biological role, catalyzes the attachment of glutamate to tRNA(Glu) in a two-step reaction: glutamate is first activated by ATP to form Glu-AMP and then transferred to the acceptor end of tRNA(Glu). In Clostridium perfringens (strain SM101 / Type A), this protein is Glutamate--tRNA ligase.